We begin with the raw amino-acid sequence, 151 residues long: MSSESRSASSPVAPDDIEEGVVLRPKFDAHGLVTVVATDARTGDVLMVAFMNGEALDRTIQTGEAWYYSRSRKRLWKKGETSGHIQKVLEMRVDCDQDAVWIKVDQTGGAACHTGRHSCFYRRIDRGGDGAPVLIETDSERKFDPDKVYGK.

Residue Asp94 participates in Mg(2+) binding. Cys95 contacts Zn(2+). 2 residues coordinate Mg(2+): Asp96 and Asp98. Cys112 and Cys119 together coordinate Zn(2+).

It belongs to the PRA-CH family. As to quaternary structure, homodimer. It depends on Mg(2+) as a cofactor. Zn(2+) serves as cofactor.

Its subcellular location is the cytoplasm. It carries out the reaction 1-(5-phospho-beta-D-ribosyl)-5'-AMP + H2O = 1-(5-phospho-beta-D-ribosyl)-5-[(5-phospho-beta-D-ribosylamino)methylideneamino]imidazole-4-carboxamide. It functions in the pathway amino-acid biosynthesis; L-histidine biosynthesis; L-histidine from 5-phospho-alpha-D-ribose 1-diphosphate: step 3/9. Catalyzes the hydrolysis of the adenine ring of phosphoribosyl-AMP. The chain is Phosphoribosyl-AMP cyclohydrolase from Rhodopseudomonas palustris (strain ATCC BAA-98 / CGA009).